We begin with the raw amino-acid sequence, 211 residues long: tRNA (guanine-N(7)-)-methyltransferase (211 aa).

Asp40, Glu65, Asn92, and Asp117 together coordinate S-adenosyl-L-methionine. Residue Asp117 is part of the active site. Lys121 is a substrate binding site. An interaction with RNA region spans residues Arg123–Arg128. Asp153 is a binding site for substrate.

The protein belongs to the class I-like SAM-binding methyltransferase superfamily. TrmB family.

It carries out the reaction guanosine(46) in tRNA + S-adenosyl-L-methionine = N(7)-methylguanosine(46) in tRNA + S-adenosyl-L-homocysteine. It functions in the pathway tRNA modification; N(7)-methylguanine-tRNA biosynthesis. Functionally, catalyzes the formation of N(7)-methylguanine at position 46 (m7G46) in tRNA. This Synechocystis sp. (strain ATCC 27184 / PCC 6803 / Kazusa) protein is tRNA (guanine-N(7)-)-methyltransferase.